An 858-amino-acid polypeptide reads, in one-letter code: Beta-galactosidase 6 (858 aa).

Residues methionine 1–alanine 30 form the signal peptide. Residue asparagine 32 is glycosylated (N-linked (GlcNAc...) asparagine). The Proton donor role is filled by glutamate 189. Glutamate 258 (nucleophile) is an active-site residue. Asparagine 259, asparagine 482, asparagine 507, asparagine 595, and asparagine 830 each carry an N-linked (GlcNAc...) asparagine glycan. Residues glutamine 772–serine 858 form the SUEL-type lectin domain.

Belongs to the glycosyl hydrolase 35 family.

The protein localises to the secreted. It is found in the extracellular space. It localises to the apoplast. It catalyses the reaction Hydrolysis of terminal non-reducing beta-D-galactose residues in beta-D-galactosides.. Its function is as follows. Releases galactose by hydrolysis of plant cell wall galactose-containing polysaccharides such as galacto-xyloglucan, pectic galactan and galactan (in vitro). In Oryza sativa subsp. japonica (Rice), this protein is Beta-galactosidase 6.